The sequence spans 256 residues: 5-keto-4-deoxy-D-glucarate aldolase (256 aa).

The active-site Proton acceptor is the histidine 50. Substrate is bound at residue glutamine 151. Glutamate 153 lines the Mg(2+) pocket. Residues serine 178 and aspartate 179 each coordinate substrate. Aspartate 179 contributes to the Mg(2+) binding site.

It belongs to the HpcH/HpaI aldolase family. KDGluc aldolase subfamily. Homohexamer; trimer of dimers. The cofactor is Mg(2+).

It carries out the reaction 5-dehydro-4-deoxy-D-glucarate = 2-hydroxy-3-oxopropanoate + pyruvate. The catalysed reaction is 2-dehydro-3-deoxy-D-glucarate = 2-hydroxy-3-oxopropanoate + pyruvate. It participates in carbohydrate acid metabolism; galactarate degradation; D-glycerate from galactarate: step 2/3. In terms of biological role, catalyzes the reversible retro-aldol cleavage of both 5-keto-4-deoxy-D-glucarate and 2-keto-3-deoxy-D-glucarate to pyruvate and tartronic semialdehyde. This chain is 5-keto-4-deoxy-D-glucarate aldolase, found in Escherichia coli O6:H1 (strain CFT073 / ATCC 700928 / UPEC).